A 597-amino-acid polypeptide reads, in one-letter code: Elongation factor 4 (597 aa).

A tr-type G domain is found at 2-184; the sequence is KNIRNFSIIA…EIVAKIPAPT (183 aa). Residues 14 to 19 and 131 to 134 each bind GTP; these read DHGKST and NKID.

This sequence belongs to the TRAFAC class translation factor GTPase superfamily. Classic translation factor GTPase family. LepA subfamily.

The protein resides in the cell inner membrane. It carries out the reaction GTP + H2O = GDP + phosphate + H(+). Its function is as follows. Required for accurate and efficient protein synthesis under certain stress conditions. May act as a fidelity factor of the translation reaction, by catalyzing a one-codon backward translocation of tRNAs on improperly translocated ribosomes. Back-translocation proceeds from a post-translocation (POST) complex to a pre-translocation (PRE) complex, thus giving elongation factor G a second chance to translocate the tRNAs correctly. Binds to ribosomes in a GTP-dependent manner. The chain is Elongation factor 4 from Neisseria meningitidis serogroup C / serotype 2a (strain ATCC 700532 / DSM 15464 / FAM18).